Consider the following 567-residue polypeptide: Potassium-transporting ATPase potassium-binding subunit (567 aa).

A run of 11 helical transmembrane segments spans residues 3–23 (FIGWCQIALFGAVVVALVKPL), 64–84 (LTFTLAMLLFHIGGFAIIYAV), 136–156 (ALTHQNFLSAATGIVLAMALI), 179–199 (LYVLLPICIPYALFLVWQGMP), 254–274 (LSNFVQMLSIFVLGAALTNVF), 285–305 (WAILGVMGVLFVVGIAVAYWA), 330–350 (FGIVASALFAVVTTAASCGAV), 357–376 (FTALGGMIPLINMQLGEIIV), 421–441 (MLAILVLPLMYLGWTAIAVVL), 473–495 (AFGGLTGNTFFYNLTLATAMFVG), and 527–547 (GGLFVGLVVGVILIIGGLTFF).

The protein belongs to the KdpA family. The system is composed of three essential subunits: KdpA, KdpB and KdpC.

Its subcellular location is the cell inner membrane. Part of the high-affinity ATP-driven potassium transport (or Kdp) system, which catalyzes the hydrolysis of ATP coupled with the electrogenic transport of potassium into the cytoplasm. This subunit binds the periplasmic potassium ions and delivers the ions to the membrane domain of KdpB through an intramembrane tunnel. This chain is Potassium-transporting ATPase potassium-binding subunit, found in Rhodopseudomonas palustris (strain ATCC BAA-98 / CGA009).